The chain runs to 136 residues: Transcription antitermination protein NusB (136 aa).

The protein belongs to the NusB family.

In terms of biological role, involved in transcription antitermination. Required for transcription of ribosomal RNA (rRNA) genes. Binds specifically to the boxA antiterminator sequence of the ribosomal RNA (rrn) operons. The sequence is that of Transcription antitermination protein NusB from Kineococcus radiotolerans (strain ATCC BAA-149 / DSM 14245 / SRS30216).